A 181-amino-acid chain; its full sequence is Adenylate kinase (181 aa).

10–15 (GAGKGT) is a binding site for ATP. The interval 30–59 (STGELFRKNIQDGTKLGIEAKRYLDAGDLV) is NMP. Residues Thr31, Arg36, 57 to 59 (DLV), 85 to 88 (GYPR), and Gln92 contribute to the AMP site. The segment at 126 to 132 (GRGRADD) is LID. ATP is bound at residue Arg127. Arg129 and Arg140 together coordinate AMP. Gly166 contributes to the ATP binding site.

The protein belongs to the adenylate kinase family. As to quaternary structure, monomer.

The protein localises to the cytoplasm. It carries out the reaction AMP + ATP = 2 ADP. The protein operates within purine metabolism; AMP biosynthesis via salvage pathway; AMP from ADP: step 1/1. In terms of biological role, catalyzes the reversible transfer of the terminal phosphate group between ATP and AMP. Plays an important role in cellular energy homeostasis and in adenine nucleotide metabolism. The sequence is that of Adenylate kinase from Mycobacterium marinum (strain ATCC BAA-535 / M).